The sequence spans 82 residues: Neuropeptide-like peptide 36 (82 aa).

The chain is Neuropeptide-like peptide 36 (nlp-36) from Caenorhabditis elegans.